The chain runs to 263 residues: MSLPASFDLTAEDAKLLLAANVHLGAKNCQVHNEPYVYKTRPDGVNVINIGKTWEKIVLAARIIAAIPNPEDVVAVSSRTFGQRAVLKFASHTNGSAIAGRFTPGSFTNYITREFKEPRLIIVTDPRTDSQAIKESSYVNIPIIALTDMDSPSEFVDVAIPCNNKGKHSIGLIWYLLSREVLRLRGVLPNRTEAWSVMPDLYFYRDPEEIEQTAEEEAEAAEGAEFEVEEEEVEQEWQEPAEADWNASAPPADWNDAANAEAF.

Position 2 is an N-acetylserine (Ser2). Residues 211–242 (EQTAEEEAEAAEGAEFEVEEEEVEQEWQEPAE) are compositionally biased toward acidic residues. A disordered region spans residues 211 to 263 (EQTAEEEAEAAEGAEFEVEEEEVEQEWQEPAEADWNASAPPADWNDAANAEAF). Over residues 246–263 (NASAPPADWNDAANAEAF) the composition is skewed to low complexity.

The protein belongs to the universal ribosomal protein uS2 family. In terms of assembly, component of the small ribosomal subunit. Mature ribosomes consist of a small (40S) and a large (60S) subunit. The 40S subunit contains about 33 different proteins and 1 molecule of RNA (18S). The 60S subunit contains about 49 different proteins and 3 molecules of RNA (25S, 5.8S and 5S). Interacts with RPS21.

It is found in the cytoplasm. Functionally, required for the assembly and/or stability of the 40S ribosomal subunit. Required for the processing of the 20S rRNA-precursor to mature 18S rRNA in a late step of the maturation of 40S ribosomal subunits. The polypeptide is Small ribosomal subunit protein uS2 (Komagataella phaffii (strain GS115 / ATCC 20864) (Yeast)).